Consider the following 896-residue polypeptide: DNA mismatch repair protein MutS (896 aa).

Residue 607–614 (GPNMSGKS) coordinates ATP. The tract at residues 809–835 (ANSVAPNTAASMPVEAADESQPVESET) is disordered.

Belongs to the DNA mismatch repair MutS family.

This protein is involved in the repair of mismatches in DNA. It is possible that it carries out the mismatch recognition step. This protein has a weak ATPase activity. The chain is DNA mismatch repair protein MutS from Lactiplantibacillus plantarum (strain ATCC BAA-793 / NCIMB 8826 / WCFS1) (Lactobacillus plantarum).